A 114-amino-acid polypeptide reads, in one-letter code: Vacuolar morphogenesis protein 10 (114 aa).

Its subcellular location is the vacuole membrane. Functionally, required for vacuolar fusion. Involved in the early steps of the fusion pathway. This is Vacuolar morphogenesis protein 10 (VAM10) from Saccharomyces cerevisiae (strain ATCC 204508 / S288c) (Baker's yeast).